Here is a 319-residue protein sequence, read N- to C-terminus: Ankyrin repeat domain-containing protein 1 (319 aa).

The disordered stretch occupies residues 46–65 (KTLPANSVKQGEEQRKSEKL). A coiled-coil region spans residues 53-89 (VKQGEEQRKSEKLREAELKKKKLEQRSKLENLEDLEI). Basic and acidic residues predominate over residues 55-65 (QGEEQRKSEKL). ANK repeat units follow at residues 152 to 181 (YKRT…QIEF), 185 to 214 (LEST…KISA), 218 to 247 (LLST…DLNA), 251 to 280 (EGDT…DLKV), and 284 to 315 (AGKT…KNSR).

As to quaternary structure, interacts with TTN/titin and YBX1. Expressed in heart, cardiac muscle.

It localises to the nucleus. Functionally, may play an important role in endothelial cell activation. May act as a nuclear transcription factor that negatively regulates the expression of cardiac genes. In Mus musculus (Mouse), this protein is Ankyrin repeat domain-containing protein 1 (Ankrd1).